The primary structure comprises 152 residues: Photosystem II extrinsic protein U, chloroplastic (152 aa).

The N-terminal 35 residues, 1 to 35 (MDSTAFVGAAAPLRVAAAARSTICMAAADDKPVVS), are a transit peptide targeting the chloroplast. Residues 36–59 (RRAALTGAAAAALAAVAGSLPALA) constitute a thylakoid transit peptide.

Belongs to the PsbU family. PSII is composed of 1 copy each of membrane proteins PsbA, PsbB, PsbC, PsbD, PsbE, PsbF, PsbH, PsbI, PsbJ, PsbK, PsbL, PsbM, PsbT, PsbX, PsbY, PsbZ, Psb30/Ycf12, at least 3 peripheral proteins of the oxygen-evolving complex and a large number of cofactors. It forms dimeric complexes. The oxygen-evolving complex in red algae is composed of PsbO (OEC33), PsbQ', cytochrome c-550 and PsbU. In terms of processing, predicted to be translocated into the thylakoid lumen by the Tat system.

The protein resides in the plastid. The protein localises to the chloroplast thylakoid membrane. One of the extrinsic, lumenal subunits of photosystem II (PSII). PSII is a light-driven water plastoquinone oxidoreductase, using light energy to abstract electrons from H(2)O, generating a proton gradient subsequently used for ATP formation. The extrinsic proteins stabilize the structure of photosystem II oxygen-evolving complex (OEC), the ion environment of oxygen evolution and protect the OEC against heat-induced inactivation. The sequence is that of Photosystem II extrinsic protein U, chloroplastic from Pyropia yezoensis (Susabi-nori).